We begin with the raw amino-acid sequence, 239 residues long: ISSGCGTTGALSCSSNAKGTCCFEAPGGLILQTQFWDTSPETGPTDSWTIHGLWPDNCDGSFSEDCDPSRDYTGISSLLTAQGASDTLQFMNQFWLNDPDDGSNEELWEHEWATHGTCYSTLQTSCLPEGSPKGAEAVAFFEQVVTLFKTLPTYEWLTNQGIKPSSSTTHTYSALTAALEAEAGVIPALNCDGSDLDEIYWYFHLRGSVIDGEFEPISAPEKGDCPSSGIKWLPKNNEK.

Disulfide bonds link Cys-5/Cys-22, Cys-13/Cys-58, Cys-21/Cys-126, Cys-66/Cys-118, and Cys-191/Cys-225. Catalysis depends on residues His-51, Glu-111, and His-115.

The protein belongs to the RNase T2 family.

The enzyme catalyses a ribonucleotidyl-ribonucleotide-RNA + H2O = a 3'-end 3'-phospho-ribonucleotide-RNA + a 5'-end dephospho-ribonucleoside-RNA + H(+). Its function is as follows. This is a base non-specific and adenylic acid preferential ribonuclease. This Lentinula edodes (Shiitake mushroom) protein is Ribonuclease Le2.